We begin with the raw amino-acid sequence, 212 residues long: RNA chaperone ProQ (212 aa).

The tract at residues 107-153 is disordered; that stretch reads QDKAKAKRVAQAKSANPAAKTAKKPVKKPVAKRPKQTQSSKPAKEPV. Over residues 117–126 the composition is skewed to low complexity; the sequence is QAKSANPAAK. A compositionally biased stretch (basic residues) spans 127–141; that stretch reads TAKKPVKKPVAKRPK.

This sequence belongs to the ProQ family.

It is found in the cytoplasm. In terms of biological role, RNA chaperone with significant RNA binding, RNA strand exchange and RNA duplexing activities. This Shewanella halifaxensis (strain HAW-EB4) protein is RNA chaperone ProQ.